Here is a 117-residue protein sequence, read N- to C-terminus: Cell division protein FtsB (117 aa).

Residues 1 to 6 (MRDWRW) are Cytoplasmic-facing. The chain crosses the membrane as a helical span at residues 7–24 (MLLVLALLLGWLQYRFWF). Over 25–117 (GPGNSGEVMM…QVGEHPADVP (93 aa)) the chain is Periplasmic. Residues 29-69 (SGEVMMLEAQVTNQERDNEGLQQRNDALAAEVKDLKEGQSA) adopt a coiled-coil conformation.

This sequence belongs to the FtsB family. Part of a complex composed of FtsB, FtsL and FtsQ.

It is found in the cell inner membrane. Essential cell division protein. May link together the upstream cell division proteins, which are predominantly cytoplasmic, with the downstream cell division proteins, which are predominantly periplasmic. This chain is Cell division protein FtsB, found in Stenotrophomonas maltophilia (strain R551-3).